The primary structure comprises 1033 residues: Kinesin-like protein KIN-4A (1033 aa).

In terms of domain architecture, Kinesin motor spans 11–366 (CVKVAVHVRP…LKYANRARNI (356 aa)). Position 89-96 (89-96 (GQTGSGKT)) interacts with ATP. Residues 443-462 (QDGSPCSVESDGLKRNLRSR) are disordered. The span at 453–462 (DGLKRNLRSR) shows a compositional bias: basic and acidic residues. A coiled-coil region spans residues 525–638 (ALKQHFGKKI…IKQEAEQFRQ (114 aa)). The disordered stretch occupies residues 763–785 (DELDSKGPSPSRGKNGCARGSSL). Positions 863 to 895 (IEIREMKEQLKELVGLLRQSELQRKEVENELKL) form a coiled coil.

This sequence belongs to the TRAFAC class myosin-kinesin ATPase superfamily. Kinesin family. KIN-4 subfamily. Homodimer. As to expression, expressed in cotton fibers.

Its subcellular location is the cytoplasm. Its function is as follows. Kinesin-like motor protein involved in the control of the oriented deposition of cellulose microfibrils. This Gossypium hirsutum (Upland cotton) protein is Kinesin-like protein KIN-4A.